The primary structure comprises 204 residues: Imidazole glycerol phosphate synthase subunit HisH (204 aa).

Residues 1 to 204 (MIKIVDYGLG…MTLLKNFSEI (204 aa)) enclose the Glutamine amidotransferase type-1 domain. C80 functions as the Nucleophile in the catalytic mechanism. Active-site residues include H186 and E188.

In terms of assembly, heterodimer of HisH and HisF.

The protein resides in the cytoplasm. The catalysed reaction is 5-[(5-phospho-1-deoxy-D-ribulos-1-ylimino)methylamino]-1-(5-phospho-beta-D-ribosyl)imidazole-4-carboxamide + L-glutamine = D-erythro-1-(imidazol-4-yl)glycerol 3-phosphate + 5-amino-1-(5-phospho-beta-D-ribosyl)imidazole-4-carboxamide + L-glutamate + H(+). The enzyme catalyses L-glutamine + H2O = L-glutamate + NH4(+). It participates in amino-acid biosynthesis; L-histidine biosynthesis; L-histidine from 5-phospho-alpha-D-ribose 1-diphosphate: step 5/9. IGPS catalyzes the conversion of PRFAR and glutamine to IGP, AICAR and glutamate. The HisH subunit catalyzes the hydrolysis of glutamine to glutamate and ammonia as part of the synthesis of IGP and AICAR. The resulting ammonia molecule is channeled to the active site of HisF. The protein is Imidazole glycerol phosphate synthase subunit HisH of Bdellovibrio bacteriovorus (strain ATCC 15356 / DSM 50701 / NCIMB 9529 / HD100).